The chain runs to 533 residues: Phosphatidylinositol 4-kinase gamma 8 (533 aa).

The 297-residue stretch at 101 to 397 (GAQPLLLPSG…AVSGSDDDDD (297 aa)) folds into the PI3K/PI4K catalytic domain. Residues 107-113 (LPSGLGG) form a G-loop region. Residues 108 to 114 (PSGLGGA), Lys-129, and 210 to 213 (QRFV) contribute to the ATP site. Residues 243–251 (LNLDRHAGN) form a catalytic loop region. The interval 276–302 (PIDHGLCLPECLDDPYFEWLNWPQASV) is activation loop. Position 278 (Asp-278) interacts with ATP.

Belongs to the PI3/PI4-kinase family. Type II PI4K subfamily.

The enzyme catalyses a 1,2-diacyl-sn-glycero-3-phospho-(1D-myo-inositol) + ATP = a 1,2-diacyl-sn-glycero-3-phospho-(1D-myo-inositol 4-phosphate) + ADP + H(+). Functionally, the phosphorylation of phosphatidylinositol (PI) to PI4P is the first committed step in the generation of phosphatidylinositol 4,5-bisphosphate (PIP2), a precursor of the second messenger inositol 1,4,5-trisphosphate (InsP3). The polypeptide is Phosphatidylinositol 4-kinase gamma 8 (PI4KG8) (Arabidopsis thaliana (Mouse-ear cress)).